Consider the following 365-residue polypeptide: Methylthioribose-1-phosphate isomerase (365 aa).

Residues 53 to 55, R90, and Q201 each bind substrate; that span reads RGA. Residue D242 is the Proton donor of the active site. Residue 252-253 participates in substrate binding; it reads NK.

The protein belongs to the eIF-2B alpha/beta/delta subunits family. MtnA subfamily.

It carries out the reaction 5-(methylsulfanyl)-alpha-D-ribose 1-phosphate = 5-(methylsulfanyl)-D-ribulose 1-phosphate. It participates in amino-acid biosynthesis; L-methionine biosynthesis via salvage pathway; L-methionine from S-methyl-5-thio-alpha-D-ribose 1-phosphate: step 1/6. In terms of biological role, catalyzes the interconversion of methylthioribose-1-phosphate (MTR-1-P) into methylthioribulose-1-phosphate (MTRu-1-P). The sequence is that of Methylthioribose-1-phosphate isomerase from Methylorubrum extorquens (strain CM4 / NCIMB 13688) (Methylobacterium extorquens).